The chain runs to 106 residues: A-type ATP synthase subunit F (106 aa).

This sequence belongs to the V-ATPase F subunit family. As to quaternary structure, has multiple subunits with at least A(3), B(3), C, D, E, F, H, I and proteolipid K(x).

It localises to the cell membrane. Functionally, component of the A-type ATP synthase that produces ATP from ADP in the presence of a proton gradient across the membrane. The polypeptide is A-type ATP synthase subunit F (Methanothermobacter thermautotrophicus (strain ATCC 29096 / DSM 1053 / JCM 10044 / NBRC 100330 / Delta H) (Methanobacterium thermoautotrophicum)).